Reading from the N-terminus, the 337-residue chain is Anthranilate phosphoribosyltransferase (337 aa).

5-phospho-alpha-D-ribose 1-diphosphate is bound by residues glycine 81, 84 to 85 (GD), serine 89, 91 to 94 (NVST), 109 to 117 (KHGNRAATS), and alanine 121. Glycine 81 provides a ligand contact to anthranilate. Serine 93 contacts Mg(2+). An anthranilate-binding site is contributed by asparagine 112. Arginine 167 contributes to the anthranilate binding site. Mg(2+) contacts are provided by aspartate 226 and glutamate 227.

The protein belongs to the anthranilate phosphoribosyltransferase family. Homodimer. The cofactor is Mg(2+).

The enzyme catalyses N-(5-phospho-beta-D-ribosyl)anthranilate + diphosphate = 5-phospho-alpha-D-ribose 1-diphosphate + anthranilate. Its pathway is amino-acid biosynthesis; L-tryptophan biosynthesis; L-tryptophan from chorismate: step 2/5. In terms of biological role, catalyzes the transfer of the phosphoribosyl group of 5-phosphorylribose-1-pyrophosphate (PRPP) to anthranilate to yield N-(5'-phosphoribosyl)-anthranilate (PRA). The chain is Anthranilate phosphoribosyltransferase from Methylorubrum extorquens (strain CM4 / NCIMB 13688) (Methylobacterium extorquens).